The chain runs to 275 residues: Diaminopimelate epimerase (275 aa).

Residues asparagine 20 and asparagine 63 each contribute to the substrate site. Residue cysteine 72 is the Proton donor of the active site. Substrate contacts are provided by residues 73–74 (GN), asparagine 179, and 197–198 (ER). Cysteine 207 acts as the Proton acceptor in catalysis. Residue 208-209 (GT) participates in substrate binding.

Belongs to the diaminopimelate epimerase family. As to quaternary structure, homodimer.

The protein resides in the cytoplasm. The enzyme catalyses (2S,6S)-2,6-diaminopimelate = meso-2,6-diaminopimelate. It participates in amino-acid biosynthesis; L-lysine biosynthesis via DAP pathway; DL-2,6-diaminopimelate from LL-2,6-diaminopimelate: step 1/1. Its function is as follows. Catalyzes the stereoinversion of LL-2,6-diaminopimelate (L,L-DAP) to meso-diaminopimelate (meso-DAP), a precursor of L-lysine and an essential component of the bacterial peptidoglycan. The chain is Diaminopimelate epimerase from Chlamydia trachomatis serovar A (strain ATCC VR-571B / DSM 19440 / HAR-13).